A 207-amino-acid polypeptide reads, in one-letter code: Uracil phosphoribosyltransferase (207 aa).

5-phospho-alpha-D-ribose 1-diphosphate-binding positions include arginine 77, arginine 102, and 129-137; that span reads DPMLATGGS. Uracil contacts are provided by residues isoleucine 192 and 197-199; that span reads GDA. 5-phospho-alpha-D-ribose 1-diphosphate is bound at residue aspartate 198.

Belongs to the UPRTase family. Mg(2+) is required as a cofactor.

The enzyme catalyses UMP + diphosphate = 5-phospho-alpha-D-ribose 1-diphosphate + uracil. Its pathway is pyrimidine metabolism; UMP biosynthesis via salvage pathway; UMP from uracil: step 1/1. Its activity is regulated as follows. Allosterically activated by GTP. Its function is as follows. Catalyzes the conversion of uracil and 5-phospho-alpha-D-ribose 1-diphosphate (PRPP) to UMP and diphosphate. The sequence is that of Uracil phosphoribosyltransferase from Dictyoglomus thermophilum (strain ATCC 35947 / DSM 3960 / H-6-12).